The following is a 651-amino-acid chain: Probable potassium transport system protein Kup (651 aa).

Residues Met1–Asp16 show a composition bias toward basic and acidic residues. Residues Met1–Ser31 are disordered. The next 12 helical transmembrane spans lie at Phe38–Leu58, Val74–Val94, Leu129–Thr149, Leu168–Ser188, Ala197–Ile217, Ala232–Leu252, Trp276–Leu296, Leu309–Ala329, Ile366–Phe386, Tyr396–Trp416, Pro423–Ala443, and Leu448–Thr468.

This sequence belongs to the HAK/KUP transporter (TC 2.A.72) family.

Its subcellular location is the cell inner membrane. The catalysed reaction is K(+)(in) + H(+)(in) = K(+)(out) + H(+)(out). Functionally, transport of potassium into the cell. Likely operates as a K(+):H(+) symporter. The polypeptide is Probable potassium transport system protein Kup (Nitrobacter winogradskyi (strain ATCC 25391 / DSM 10237 / CIP 104748 / NCIMB 11846 / Nb-255)).